Consider the following 1231-residue polypeptide: RNA-binding protein 33 (1231 aa).

Over residues 1-13 the composition is skewed to gly residues; that stretch reads MAAALGAGGGAGA. Disordered regions lie at residues 1–168 and 219–261; these read MAAA…EEEQ and SQVA…FKTE. At Ala2 the chain carries N-acetylalanine. Basic and acidic residues predominate over residues 20 to 36; sequence QFDKPGAERSWRRRAAD. Acidic residues predominate over residues 37–49; it reads EDWDSELEDDLLG. Ser41 is subject to Phosphoserine. The span at 82–108 shows a compositional bias: polar residues; the sequence is FSSQGVTISLNTTSGIVTSFELSDNTN. Acidic residues-rich tracts occupy residues 112–124 and 153–168; these read GEQE…GDDE and LTED…EEEQ. Basic and acidic residues predominate over residues 224-240; it reads ETHEGGMETLELQKDIK. Positions 241 to 252 are enriched in acidic residues; sequence EESDEEDDDDEE. Phosphoserine is present on residues Ser243 and Ser271. Disordered stretches follow at residues 297-436 and 452-761; these read FEER…KNIH and PLLP…NLRE. A compositionally biased stretch (basic residues) spans 305–316; it reads KQGRYGSRRGGR. The span at 327-344 shows a compositional bias: basic and acidic residues; that stretch reads GDQRRDNSERGRMKEHRP. Residues 360 to 379 are compositionally biased toward pro residues; it reads LIPPPQPQPPPPPPPPPPQQ. The segment covering 380–398 has biased composition (low complexity); it reads QPIRSLFQQQQLQPLLPLQ. Residues 469–483 are compositionally biased toward pro residues; that stretch reads FPGPPEFPQHTPGPV. Arg520 carries the post-translational modification Asymmetric dimethylarginine. Pro residues-rich tracts occupy residues 531 to 540, 604 to 618, 632 to 647, and 661 to 682; these read SPPPPPPPPT, FIPP…PGQP, LHPP…PQPQ, and PLQP…PPQH. Polar residues-rich tracts occupy residues 713-728 and 736-759; these read QTAQ…QCTP and AASQ…NSNL. A phosphoserine mark is found at Ser792 and Ser816. 3 disordered regions span residues 796 to 840, 876 to 932, and 998 to 1080; these read RAVV…ETRL, ERLA…FPGA, and ETPH…MRQQ. Residues 820-829 are compositionally biased toward basic and acidic residues; that stretch reads QPKEEAKPEA. Positions 840 to 891 form a coiled coil; the sequence is LYRLKIEEQKRLREEILKQKELRRQQQAGARKKELLERLAQQQQQQQQQQHQ. Over residues 880-901 the composition is skewed to low complexity; the sequence is QQQQQQQQQQHQPQQQQQQPQQ. A phosphoserine mark is found at Ser1002 and Ser1010. Lys1019 is covalently cross-linked (Glycyl lysine isopeptide (Lys-Gly) (interchain with G-Cter in SUMO2)). Residues Ser1032 and Ser1051 each carry the phosphoserine modification.

In terms of assembly, associates with the NXF1-NXT1 RNA export complex. Interacts with ALKBH5; facilitating ALKBH5 recruitment to m6A-containing transcripts. Interacts with SENP1; promoting ALKBH5 deSUMOylation and subsequent activation.

Its subcellular location is the nucleus. The protein localises to the cytoplasm. Its function is as follows. RNA reader protein, which recognizes and binds specific RNAs, thereby regulating RNA metabolic processes, such as mRNA export, mRNA stability and/or translation. Binds a subset of intronless RNAs containing GC-rich elements, such as NORAD, and promotes their nuclear export by recruiting target RNAs to components of the NXF1-NXT1 RNA export machinery. Specifically recognizes and binds N6-methyladenosine (m6A)-containing mRNAs, promoting their demethylation by ALKBH5. Acts as an molecular adapter, which (1) promotes ALKBH5 recruitment to m6A-containing transcripts and (2) activates ALKBH5 demethylase activity by recruiting SENP1, leading to ALKBH5 deSUMOylation and subsequent activation. This is RNA-binding protein 33 from Mus musculus (Mouse).